The following is a 237-amino-acid chain: Golgi to ER traffic protein 1 (237 aa).

Residues 1-4 lie on the Lumenal side of the membrane; that stretch reads MDSG. A helical membrane pass occupies residues 5–24; that stretch reads GWIVYCCIFFILLGKVLEYT. Topologically, residues 25–110 are cytoplasmic; it reads SSYQDKWFTK…SSKKVFGRVK (86 aa). A coiled-coil region spans residues 40-99; it reads EARKLNSQYHELLSERLRLQEENHSISAQDNYARWTKNNRKLGELDKKLGTIRDKLQETN. Residues 111–131 form a helical membrane-spanning segment; sequence LIGLTIPFWILKIWQRSHVVY. Residues 132-176 are Lumenal-facing; the sequence is HFPKQDLFPKLVTGVWARGWLYLALGPLQYLRNGSLNIQDYAPHG. Residues 177-193 form a helical membrane-spanning segment; that stretch reads VSLGIWIWALQATINTL. Residues 194-237 are Cytoplasmic-facing; sequence EFLVKQVILEKPVSPPPQKSKSATKAETKRPEKLEITDDKVELD. The interval 205–237 is disordered; that stretch reads PVSPPPQKSKSATKAETKRPEKLEITDDKVELD. The span at 217-237 shows a compositional bias: basic and acidic residues; sequence TKAETKRPEKLEITDDKVELD.

It belongs to the WRB/GET1 family. As to quaternary structure, component of the Golgi to ER traffic (GET) complex, which is composed of GET1, GET2 and GET3. Within the complex, GET1 and GET2 form a heterotetramer which is stabilized by phosphatidylinositol binding and which binds to the GET3 homodimer.

It is found in the endoplasmic reticulum membrane. It localises to the golgi apparatus membrane. Functionally, required for the post-translational delivery of tail-anchored (TA) proteins to the endoplasmic reticulum. Together with GET2, acts as a membrane receptor for soluble GET3, which recognizes and selectively binds the transmembrane domain of TA proteins in the cytosol. The GET complex cooperates with the HDEL receptor ERD2 to mediate the ATP-dependent retrieval of resident ER proteins that contain a C-terminal H-D-E-L retention signal from the Golgi to the ER. In Zygosaccharomyces rouxii (strain ATCC 2623 / CBS 732 / NBRC 1130 / NCYC 568 / NRRL Y-229), this protein is Golgi to ER traffic protein 1.